The following is a 285-amino-acid chain: HTH-type transcriptional regulator MurR (285 aa).

The region spanning 1 to 77 is the HTH rpiR-type domain; the sequence is MLYLTKISNA…MALIGEYSAS (77 aa). The H-T-H motif DNA-binding region spans 37 to 56; it reads SRQMAKQLGISQSSIVKFAQ. The 152-residue stretch at 128–279 folds into the SIS domain; that stretch reads IIEVISKAPF…SLKMIQRSSE (152 aa).

Homotetramer.

It participates in amino-sugar metabolism; N-acetylmuramate degradation [regulation]. Functionally, represses the expression of the murPQ operon involved in the uptake and degradation of N-acetylmuramic acid (MurNAc). Binds to two adjacent inverted repeats within the operator region. MurNAc 6-phosphate, the substrate of MurQ, is the specific inducer that weakens binding of MurR to the operator. This is HTH-type transcriptional regulator MurR from Shigella boydii serotype 18 (strain CDC 3083-94 / BS512).